The following is an 87-amino-acid chain: Protein anon-73B1 (87 aa).

Residues Leu-25–Leu-47 form a helical membrane-spanning segment. Residues Asn-50–Arg-87 are disordered. The segment covering Val-63 to Arg-72 has biased composition (basic and acidic residues). Over residues Thr-73–Arg-87 the composition is skewed to basic residues.

It belongs to the UPF0239 family.

The protein resides in the membrane. The protein is Protein anon-73B1 (anon-73B1) of Drosophila simulans (Fruit fly).